A 701-amino-acid polypeptide reads, in one-letter code: MIPAIPARPQRKKGDSAEDSPVPEVPQRPMRHSTTEEIADLVSNTTKELEEMEQLISHGHKGEEPVVPQRRPKVVKAKEHENKQVVDTPEMPSIPQRPRRKQTSESLESVSVADGQGSKATEEMTATDSPMEDKDTNMVENTADVSKAKESTELNVPGGTEETFTTEDPLPATTGSHPEAIKEISDELNEVVAGTEKPIEHTISNDKEETTLMKTSEQRDEEMKETKSNRASEKLSDNTSENETVKTSDFVAKTAEKTAEMVSPQESRDEIEKSVAKTDEETDDKQIEEQKIESIEESIPESIEVPMKKSTEEPEKEPVEDSSEILVKGQTEEPSEKSVSSSPDQSNDAPKTSTESANEIQRKSQEPTTETTSETSEKSTKDSTEPSEKVSQDRSDQNETADGEETKPHVPESRPKKRGPPPVPKKPSSRIAAFQEMLQKQQEAQFEKSQKKGEQNDGAMNSDARTKFANNLNGLFALPGMVPGGPPPPALAKVLKDPQDTANDKTSTSNDQDTGSGTNLKDVRHGRARGPRGRKLPTKVATTEKVKVSETGNTIEIFSAWKLSIKGQVVHDADDDIDCRDQDNYVETEEQNMEEQEEREMEKELMASESTVEEEETVEQEKTVEEEKPVKEELTVKEEQTKSAEPVLVNVPTGTSSDILDNEPTKTTLDVQEPSPEQKLDTEAREESGTLPTEAEPLDNE.

Disordered stretches follow at residues 1–35 (MIPA…HSTT), 53–177 (EQLI…TGSH), 203–546 (ISND…TEKV), and 589–701 (EEQN…LDNE). Basic and acidic residues predominate over residues 203–236 (ISNDKEETTLMKTSEQRDEEMKETKSNRASEKLS). Over residues 237 to 247 (DNTSENETVKT) the composition is skewed to polar residues. 2 stretches are compositionally biased toward basic and acidic residues: residues 266–294 (ESRD…KIES) and 306–319 (PMKK…KEPV). Over residues 337 to 346 (KSVSSSPDQS) the composition is skewed to low complexity. Over residues 347 to 359 (NDAPKTSTESANE) the composition is skewed to polar residues. 4 stretches are compositionally biased toward basic and acidic residues: residues 375–397 (TSEK…RSDQ), 404–414 (EETKPHVPESR), 445–455 (QFEKSQKKGEQ), and 494–503 (VLKDPQDTAN). The segment covering 504–519 (DKTSTSNDQDTGSGTN) has biased composition (polar residues). The span at 524-537 (RHGRARGPRGRKLP) shows a compositional bias: basic residues. Residues 589 to 599 (EEQNMEEQEER) show a composition bias toward acidic residues. The span at 619–642 (EQEKTVEEEKPVKEELTVKEEQTK) shows a compositional bias: basic and acidic residues. A compositionally biased stretch (polar residues) spans 652-670 (PTGTSSDILDNEPTKTTLD). Residues 676–688 (PEQKLDTEAREES) show a composition bias toward basic and acidic residues.

This sequence belongs to the AIM21 family.

It localises to the cytoplasm. The protein localises to the cytoskeleton. Its subcellular location is the actin patch. Involved in mitochondrial migration along actin filaments. This chain is Altered inheritance of mitochondria protein 21 (AIM21), found in Candida glabrata (strain ATCC 2001 / BCRC 20586 / JCM 3761 / NBRC 0622 / NRRL Y-65 / CBS 138) (Yeast).